The primary structure comprises 396 residues: Tryptophan synthase beta chain (396 aa).

N6-(pyridoxal phosphate)lysine is present on K88.

The protein belongs to the TrpB family. Tetramer of two alpha and two beta chains. Pyridoxal 5'-phosphate is required as a cofactor.

The enzyme catalyses (1S,2R)-1-C-(indol-3-yl)glycerol 3-phosphate + L-serine = D-glyceraldehyde 3-phosphate + L-tryptophan + H2O. It participates in amino-acid biosynthesis; L-tryptophan biosynthesis; L-tryptophan from chorismate: step 5/5. Its function is as follows. The beta subunit is responsible for the synthesis of L-tryptophan from indole and L-serine. This Shewanella sp. (strain MR-7) protein is Tryptophan synthase beta chain.